We begin with the raw amino-acid sequence, 287 residues long: Putative sugar uptake protein spyM18_2243 (287 aa).

10 helical membrane passes run 4 to 26, 33 to 50, 55 to 72, 85 to 107, 117 to 134, 154 to 171, 181 to 200, 207 to 229, 234 to 256, and 268 to 285; these read IFYALIPMFTWGSIGFVSNKIGG, LGMTFGALLFSLAVWLIV, TLQLWLFGILGGFIWSIG, VSVANPLSSGSQLVLGSLIGVLV, FVVGSLALLLLIVGFYFS, FRALTYSTIGYVMYAVLF, SVILPMAVGMVLGAITFMSF, YVIKNSVVGLLWGIGNIFMLLAA, LAIAFSFSQLGAIISIVGGILFL, and VVTGIICFIVGAILLGVV.

The protein belongs to the GRP transporter (TC 2.A.7.5) family.

It localises to the cell membrane. This is Putative sugar uptake protein spyM18_2243 from Streptococcus pyogenes serotype M18 (strain MGAS8232).